The primary structure comprises 523 residues: Calcium uptake protein 3, mitochondrial (523 aa).

The transit peptide at 1–6 (MAALRR) directs the protein to the mitochondrion. The tract at residues 18-48 (LAPQQPFLSPWGRPAGTAPGMSGRPFSGREE) is disordered. An EF-hand 1 domain is found at 225–260 (KPHAGFRIAFNMFDTDGNEMVDKKEFLVLQEIFRKK). Ca(2+)-binding residues include Asp-238, Asp-240, Asn-242, Met-244, Asp-246, and Glu-249. The EF-hand 2; degenerate domain maps to 414 to 429 (ITFDEFRSFFQFLNNL). In terms of domain architecture, EF-hand 3 spans 463–498 (LSPHLVNTVFKIFDVDKDDQLSYKEFIGIMKDRLHR). The Ca(2+) site is built by Asp-476, Asp-478, Asp-480, Gln-482, and Glu-487.

The protein belongs to the MICU1 family. MICU3 subfamily. In terms of assembly, heterodimer; disulfide-linked; heterodimerizes with MICU1. Component of the uniplex complex, composed of MCU, EMRE/SMDT1, MICU1 and MICU3 in a 4:4:1:1 stoichiometry.

The protein resides in the mitochondrion intermembrane space. Its subcellular location is the mitochondrion inner membrane. Tissue-specific calcium sensor of the mitochondrial calcium uniporter (MCU) channel, which specifically regulates MCU channel activity in the central nervous system and skeletal muscle. Senses calcium level via its EF-hand domains: compared to MICU1 and MICU2, MICU3 has a higher affinity for calcium. MICU1 and MICU3 form a disulfide-linked heterodimer that stimulates and inhibits MCU activity, depending on the concentration of calcium. At low calcium levels, MICU1 occludes the pore of the MCU channel, preventing mitochondrial calcium uptake. At higher calcium levels, calcium-binding to MICU1 and MICU3 induces a conformational change that weakens MCU-MICU1 interactions and moves the MICU1-MICU3 heterodimer away from the pore, allowing calcium permeation through the MCU channel. The high calcium affinity of MICU3 lowers the calcium threshold necessary for calcium permeation through the MCU channel. The MICU1-MICU3 heterodimer promotes flexibility of neurotransmission in neuronal cells by enhancing mitochondrial calcium uptake in presynapses. It is also required to increase mitochondrial calcium uptake in skeletal muscle cells, thereby increasing ATP production. The polypeptide is Calcium uptake protein 3, mitochondrial (Rattus norvegicus (Rat)).